The primary structure comprises 333 residues: Ketol-acid reductoisomerase (NADP(+)) (333 aa).

The KARI N-terminal Rossmann domain maps to 2–182 (ANIYYDSDCD…GGGRAGILET (181 aa)). NADP(+) is bound by residues 25–28 (YGSQ), Lys48, Ser51, Ser53, and 83–86 (DTIQ). His108 is an active-site residue. Gly134 lines the NADP(+) pocket. Residues 183 to 331 (SFREETETDL…KKLRSMMKWL (149 aa)) form the KARI C-terminal knotted domain. Asp191, Glu195, Glu227, and Glu231 together coordinate Mg(2+). Position 252 (Ser252) interacts with substrate.

It belongs to the ketol-acid reductoisomerase family. Mg(2+) is required as a cofactor.

It catalyses the reaction (2R)-2,3-dihydroxy-3-methylbutanoate + NADP(+) = (2S)-2-acetolactate + NADPH + H(+). It carries out the reaction (2R,3R)-2,3-dihydroxy-3-methylpentanoate + NADP(+) = (S)-2-ethyl-2-hydroxy-3-oxobutanoate + NADPH + H(+). It functions in the pathway amino-acid biosynthesis; L-isoleucine biosynthesis; L-isoleucine from 2-oxobutanoate: step 2/4. It participates in amino-acid biosynthesis; L-valine biosynthesis; L-valine from pyruvate: step 2/4. Involved in the biosynthesis of branched-chain amino acids (BCAA). Catalyzes an alkyl-migration followed by a ketol-acid reduction of (S)-2-acetolactate (S2AL) to yield (R)-2,3-dihydroxy-isovalerate. In the isomerase reaction, S2AL is rearranged via a Mg-dependent methyl migration to produce 3-hydroxy-3-methyl-2-ketobutyrate (HMKB). In the reductase reaction, this 2-ketoacid undergoes a metal-dependent reduction by NADPH to yield (R)-2,3-dihydroxy-isovalerate. The sequence is that of Ketol-acid reductoisomerase (NADP(+)) from Leptospira interrogans serogroup Icterohaemorrhagiae serovar copenhageni (strain Fiocruz L1-130).